Consider the following 538-residue polypeptide: Reticuline oxidase (538 aa).

The signal sequence occupies residues 1–23 (MENKTPIFFSLSIFLSLLNCALG). A disulfide bridge links Cys30 with Cys89. The N-linked (GlcNAc...) asparagine glycan is linked to Asn38. An FAD-binding PCMH-type domain is found at 67-241 (LISKPSAIIL…YAWKIKLLPV (175 aa)). Positions 104–166 (HSYEGLSYTS…SKLGFTAGWC (63 aa)) form a cross-link, 6-(S-cysteinyl)-8alpha-(pros-histidyl)-FAD (His-Cys). N-linked (GlcNAc...) asparagine glycosylation is found at Asn423 and Asn471.

The protein belongs to the oxygen-dependent FAD-linked oxidoreductase family. It depends on FAD as a cofactor. A metal cation serves as cofactor. Post-translationally, the FAD cofactor is bound via a bicovalent 6-S-cysteinyl, 8alpha-N1-histidyl FAD linkage.

It localises to the cytoplasmic vesicle. The enzyme catalyses (S)-reticuline + O2 = (S)-scoulerine + H2O2 + H(+). Its pathway is alkaloid biosynthesis; (S)-scoulerine biosynthesis; (S)-scoulerine from (S)-reticuline: step 1/1. Essential to the formation of benzophenanthridine alkaloids in the response of plants to pathogenic attack. Catalyzes the stereospecific conversion of the N-methyl moiety of (S)-reticuline into the berberine bridge carbon of (S)-scoulerine. This is Reticuline oxidase (BBE1) from Eschscholzia californica (California poppy).